The chain runs to 68 residues: DNA-directed RNA polymerase subunit omega (68 aa).

The protein belongs to the RNA polymerase subunit omega family. In terms of assembly, the RNAP catalytic core consists of 2 alpha, 1 beta, 1 beta' and 1 omega subunit. When a sigma factor is associated with the core the holoenzyme is formed, which can initiate transcription.

The enzyme catalyses RNA(n) + a ribonucleoside 5'-triphosphate = RNA(n+1) + diphosphate. Promotes RNA polymerase assembly. Latches the N- and C-terminal regions of the beta' subunit thereby facilitating its interaction with the beta and alpha subunits. The chain is DNA-directed RNA polymerase subunit omega from Desulfitobacterium hafniense (strain DSM 10664 / DCB-2).